The sequence spans 146 residues: HTH-type transcriptional regulator FarR (146 aa).

Residues 7 to 139 (HASINIGLIQ…LKDLLAELAK (133 aa)) form the HTH marR-type domain. The H-T-H motif DNA-binding region spans 53–76 (FQDLANQACILRPSLTGILTRLEK).

Repressor activity requires the presence of the Integration Host Factor (IHF), which binds to sequences located between FarR binding sites A and C. IHF binding to the promoter region stabilizes the binding of FarR to its binding sites A and C and as a consequence, enhances repression of the farAB operon. Functionally, negatively controls expression of the farAB operon by binding directly to the farAB promoter region. Binds to three sites (sites A, B and C) within the DNA sequence upstream of farA. Also represses its own expression. This is HTH-type transcriptional regulator FarR from Neisseria gonorrhoeae.